The chain runs to 263 residues: tRNA (guanine-N(1)-)-methyltransferase (263 aa).

S-adenosyl-L-methionine-binding positions include Gly124 and 144–149 (LGDFVL).

This sequence belongs to the RNA methyltransferase TrmD family. In terms of assembly, homodimer.

Its subcellular location is the cytoplasm. The enzyme catalyses guanosine(37) in tRNA + S-adenosyl-L-methionine = N(1)-methylguanosine(37) in tRNA + S-adenosyl-L-homocysteine + H(+). Specifically methylates guanosine-37 in various tRNAs. The protein is tRNA (guanine-N(1)-)-methyltransferase of Aromatoleum aromaticum (strain DSM 19018 / LMG 30748 / EbN1) (Azoarcus sp. (strain EbN1)).